The following is a 509-amino-acid chain: ATP synthase subunit alpha (509 aa).

169 to 176 (GDRQTGKT) contributes to the ATP binding site.

The protein belongs to the ATPase alpha/beta chains family. F-type ATPases have 2 components, CF(1) - the catalytic core - and CF(0) - the membrane proton channel. CF(1) has five subunits: alpha(3), beta(3), gamma(1), delta(1), epsilon(1). CF(0) has three main subunits: a(1), b(2) and c(9-12). The alpha and beta chains form an alternating ring which encloses part of the gamma chain. CF(1) is attached to CF(0) by a central stalk formed by the gamma and epsilon chains, while a peripheral stalk is formed by the delta and b chains.

The protein resides in the cell inner membrane. The enzyme catalyses ATP + H2O + 4 H(+)(in) = ADP + phosphate + 5 H(+)(out). In terms of biological role, produces ATP from ADP in the presence of a proton gradient across the membrane. The alpha chain is a regulatory subunit. This is ATP synthase subunit alpha from Rhizobium meliloti (strain 1021) (Ensifer meliloti).